The primary structure comprises 66 residues: Large ribosomal subunit protein bL33c (66 aa).

This sequence belongs to the bacterial ribosomal protein bL33 family.

The protein localises to the plastid. The protein resides in the chloroplast. The sequence is that of Large ribosomal subunit protein bL33c from Helianthus annuus (Common sunflower).